The following is a 164-amino-acid chain: FMN reductase (NADH) RutF (164 aa).

The protein belongs to the non-flavoprotein flavin reductase family. RutF subfamily.

The catalysed reaction is FMNH2 + NAD(+) = FMN + NADH + 2 H(+). Catalyzes the reduction of FMN to FMNH2 which is used to reduce pyrimidine by RutA via the Rut pathway. The chain is FMN reductase (NADH) RutF from Escherichia coli O81 (strain ED1a).